The following is a 204-amino-acid chain: Holliday junction branch migration complex subunit RuvA (204 aa).

Residues 1–67 (MIAFLSGHLV…ETELVLYGFG (67 aa)) are domain I. Positions 68–146 (SPAERDLFVE…HWRQGMGVAD (79 aa)) are domain II. The tract at residues 147-157 (QPLAGGPPMPI) is flexible linker. Residues 157–204 (IREEVEMALLALGYSTQEIQAALQALPTHPRPTEDWLRDAITYLSQQP) form a domain III region.

Belongs to the RuvA family. In terms of assembly, homotetramer. Forms an RuvA(8)-RuvB(12)-Holliday junction (HJ) complex. HJ DNA is sandwiched between 2 RuvA tetramers; dsDNA enters through RuvA and exits via RuvB. An RuvB hexamer assembles on each DNA strand where it exits the tetramer. Each RuvB hexamer is contacted by two RuvA subunits (via domain III) on 2 adjacent RuvB subunits; this complex drives branch migration. In the full resolvosome a probable DNA-RuvA(4)-RuvB(12)-RuvC(2) complex forms which resolves the HJ.

The protein resides in the cytoplasm. Its function is as follows. The RuvA-RuvB-RuvC complex processes Holliday junction (HJ) DNA during genetic recombination and DNA repair, while the RuvA-RuvB complex plays an important role in the rescue of blocked DNA replication forks via replication fork reversal (RFR). RuvA specifically binds to HJ cruciform DNA, conferring on it an open structure. The RuvB hexamer acts as an ATP-dependent pump, pulling dsDNA into and through the RuvAB complex. HJ branch migration allows RuvC to scan DNA until it finds its consensus sequence, where it cleaves and resolves the cruciform DNA. The chain is Holliday junction branch migration complex subunit RuvA from Synechococcus sp. (strain JA-2-3B'a(2-13)) (Cyanobacteria bacterium Yellowstone B-Prime).